The following is an 851-amino-acid chain: DNA mismatch repair protein MutS (851 aa).

614–621 serves as a coordination point for ATP; that stretch reads GPNMGGKS.

It belongs to the DNA mismatch repair MutS family.

In terms of biological role, this protein is involved in the repair of mismatches in DNA. It is possible that it carries out the mismatch recognition step. This protein has a weak ATPase activity. The chain is DNA mismatch repair protein MutS from Yersinia enterocolitica serotype O:8 / biotype 1B (strain NCTC 13174 / 8081).